The sequence spans 273 residues: MKPTRPNTDIPAWLQTTTTTPTPAIKAKFWQRNQRHLRQLLSRLAQPAPVTATSHWRVAPQFKLIQLLLLVILIALSNNLILLWSLALLVGCQLLWLPPRQLRRFMGSWLISVGMAMLFVLPSYWLAGPTTLLFFGLKTSLMLANAQYYRLTTPFQDLLAGLKALHCPDLLIMTLAIAITYLRMLGQHLLLTMEALELRTVAPTAHPYRLIGALFGNLYLKSYTYALELYAAMEARGFNGHYVRSTGRRTHWRDYLALSPAIIVWILFIFWRH.

Helical transmembrane passes span 64-84 (LIQL…ILLW), 117-137 (MLFV…FFGL), 159-179 (LAGL…AIAI), 210-230 (LIGA…LELY), and 251-271 (HWRD…FIFW).

The protein belongs to the CbiQ family. As to quaternary structure, may form an energy-coupling factor (ECF) transporter complex composed of an ATP-binding protein (A component, LarO), a transmembrane protein (T component, LarQ) and a fused possible substrate-capture protein (S component, LarMN) of unknown stoichiometry.

The protein localises to the cell membrane. Functionally, probable transmembrane component of the energy-coupling factor (ECF) transporter complex LarMNQO involved in nickel import. The polypeptide is Nickel permease LarQ (Lactiplantibacillus plantarum (strain ATCC BAA-793 / NCIMB 8826 / WCFS1) (Lactobacillus plantarum)).